The primary structure comprises 285 residues: ATP synthase gamma chain (285 aa).

The protein belongs to the ATPase gamma chain family. In terms of assembly, F-type ATPases have 2 components, CF(1) - the catalytic core - and CF(0) - the membrane proton channel. CF(1) has five subunits: alpha(3), beta(3), gamma(1), delta(1), epsilon(1). CF(0) has three main subunits: a, b and c.

It localises to the cell membrane. Functionally, produces ATP from ADP in the presence of a proton gradient across the membrane. The gamma chain is believed to be important in regulating ATPase activity and the flow of protons through the CF(0) complex. The protein is ATP synthase gamma chain of Exiguobacterium sp. (strain ATCC BAA-1283 / AT1b).